The chain runs to 88 residues: Small ribosomal subunit protein uS15 (88 aa).

It belongs to the universal ribosomal protein uS15 family. In terms of assembly, part of the 30S ribosomal subunit. Forms a bridge to the 50S subunit in the 70S ribosome, contacting the 23S rRNA.

Its function is as follows. One of the primary rRNA binding proteins, it binds directly to 16S rRNA where it helps nucleate assembly of the platform of the 30S subunit by binding and bridging several RNA helices of the 16S rRNA. Forms an intersubunit bridge (bridge B4) with the 23S rRNA of the 50S subunit in the ribosome. The chain is Small ribosomal subunit protein uS15 from Verminephrobacter eiseniae (strain EF01-2).